Here is a 709-residue protein sequence, read N- to C-terminus: Phosphoribosylformylglycinamidine synthase subunit PurL (709 aa).

Residue His36 is part of the active site. Residues Tyr39 and Lys80 each contribute to the ATP site. Glu82 provides a ligand contact to Mg(2+). Substrate is bound by residues 83–86 (SHNH) and Arg105. Catalysis depends on His84, which acts as the Proton acceptor. Asp106 is a Mg(2+) binding site. Gln226 contributes to the substrate binding site. Residue Asp252 coordinates Mg(2+). Substrate is bound at residue 294-296 (ETQ). ATP-binding residues include Asp470 and Gly507. Ser510 provides a ligand contact to substrate.

Belongs to the FGAMS family. As to quaternary structure, monomer. Part of the FGAM synthase complex composed of 1 PurL, 1 PurQ and 2 PurS subunits.

It is found in the cytoplasm. The catalysed reaction is N(2)-formyl-N(1)-(5-phospho-beta-D-ribosyl)glycinamide + L-glutamine + ATP + H2O = 2-formamido-N(1)-(5-O-phospho-beta-D-ribosyl)acetamidine + L-glutamate + ADP + phosphate + H(+). The protein operates within purine metabolism; IMP biosynthesis via de novo pathway; 5-amino-1-(5-phospho-D-ribosyl)imidazole from N(2)-formyl-N(1)-(5-phospho-D-ribosyl)glycinamide: step 1/2. Functionally, part of the phosphoribosylformylglycinamidine synthase complex involved in the purines biosynthetic pathway. Catalyzes the ATP-dependent conversion of formylglycinamide ribonucleotide (FGAR) and glutamine to yield formylglycinamidine ribonucleotide (FGAM) and glutamate. The FGAM synthase complex is composed of three subunits. PurQ produces an ammonia molecule by converting glutamine to glutamate. PurL transfers the ammonia molecule to FGAR to form FGAM in an ATP-dependent manner. PurS interacts with PurQ and PurL and is thought to assist in the transfer of the ammonia molecule from PurQ to PurL. The sequence is that of Phosphoribosylformylglycinamidine synthase subunit PurL from Saccharolobus islandicus (strain M.16.27) (Sulfolobus islandicus).